A 105-amino-acid chain; its full sequence is Nitrogen fixation nifHD region GlnB-like protein 1 (105 aa).

This sequence belongs to the P(II) protein family.

In terms of biological role, could be involved in the regulation of nitrogen fixation. This is Nitrogen fixation nifHD region GlnB-like protein 1 (glnBA) from Methanothermobacter marburgensis (strain ATCC BAA-927 / DSM 2133 / JCM 14651 / NBRC 100331 / OCM 82 / Marburg) (Methanobacterium thermoautotrophicum).